A 513-amino-acid polypeptide reads, in one-letter code: ATP synthase subunit alpha (513 aa).

An ATP-binding site is contributed by 169–176; the sequence is GDRQVGKT.

It belongs to the ATPase alpha/beta chains family. F-type ATPases have 2 components, CF(1) - the catalytic core - and CF(0) - the membrane proton channel. CF(1) has five subunits: alpha(3), beta(3), gamma(1), delta(1), epsilon(1). CF(0) has three main subunits: a(1), b(2) and c(9-12). The alpha and beta chains form an alternating ring which encloses part of the gamma chain. CF(1) is attached to CF(0) by a central stalk formed by the gamma and epsilon chains, while a peripheral stalk is formed by the delta and b chains.

It localises to the cell inner membrane. It catalyses the reaction ATP + H2O + 4 H(+)(in) = ADP + phosphate + 5 H(+)(out). Functionally, produces ATP from ADP in the presence of a proton gradient across the membrane. The alpha chain is a regulatory subunit. In Aeromonas salmonicida (strain A449), this protein is ATP synthase subunit alpha.